The following is a 299-amino-acid chain: Glycine--tRNA ligase alpha subunit (299 aa).

The protein belongs to the class-II aminoacyl-tRNA synthetase family. As to quaternary structure, tetramer of two alpha and two beta subunits.

Its subcellular location is the cytoplasm. It catalyses the reaction tRNA(Gly) + glycine + ATP = glycyl-tRNA(Gly) + AMP + diphosphate. In Dictyoglomus thermophilum (strain ATCC 35947 / DSM 3960 / H-6-12), this protein is Glycine--tRNA ligase alpha subunit.